The chain runs to 98 residues: Small ribosomal subunit protein uS19 (98 aa).

2 disordered regions span residues 1–30 and 78–98; these read MARSIKKGPFADKHLTKKVEDANKGNKKSV and RTFHGHSAEKKAAAAPAPAKK. Positions 9-24 are enriched in basic and acidic residues; the sequence is PFADKHLTKKVEDANK.

The protein belongs to the universal ribosomal protein uS19 family.

Its function is as follows. Protein S19 forms a complex with S13 that binds strongly to the 16S ribosomal RNA. This chain is Small ribosomal subunit protein uS19, found in Anaeromyxobacter dehalogenans (strain 2CP-1 / ATCC BAA-258).